The chain runs to 298 residues: GTPase Era (298 aa).

One can recognise an Era-type G domain in the interval 3 to 170 (KSGFVAILGR…VQLLKDNLEE (168 aa)). A G1 region spans residues 11-18 (GRPNVGKS). Residue 11-18 (GRPNVGKS) participates in GTP binding. The tract at residues 37-41 (QSTRN) is G2. The tract at residues 58 to 61 (DTPG) is G3. GTP-binding positions include 58–62 (DTPGI) and 120–123 (NKID). Residues 120–123 (NKID) form a G4 region. Residues 149 to 151 (ISA) are G5. The region spanning 201–279 (TQQEVPHSVA…YLETWVKVKK (79 aa)) is the KH type-2 domain.

This sequence belongs to the TRAFAC class TrmE-Era-EngA-EngB-Septin-like GTPase superfamily. Era GTPase family. Monomer.

The protein resides in the cytoplasm. Its subcellular location is the cell membrane. In terms of biological role, an essential GTPase that binds both GDP and GTP, with rapid nucleotide exchange. Plays a role in 16S rRNA processing and 30S ribosomal subunit biogenesis and possibly also in cell cycle regulation and energy metabolism. This chain is GTPase Era, found in Streptococcus equi subsp. zooepidemicus (strain H70).